Here is a 401-residue protein sequence, read N- to C-terminus: Protein nanos (401 aa).

The interval 181–207 is disordered; that stretch reads LGRMSYGSAPPQVQMPPQQQHQQQQGL. Residues 190–205 show a composition bias toward low complexity; the sequence is PPQVQMPPQQQHQQQQ. A Nanos-type zinc finger spans residues 318-372; it reads HCVFCENNNEPEAVINSHSVRDNFNRVLCPKLRTYVCPICGASGDSAHTIKYCPK. Residues C319, C322, H335, C346, C354, C357, H365, and C370 each coordinate Zn(2+). 2 consecutive short sequence motifs (C2HC) follow at residues 319–346 and 354–370; these read CVFCENNNEPEAVINSHSVRDNFNRVLC and CPICGASGDSAHTIKYC.

This sequence belongs to the nanos family. Interacts with pum and brat. Interacts with cup. Interacts with mei-P26; possibly involved in regulation of brat levels. Interacts with wh; may be involved in mei-P26-dependent derepression of the BMP signaling pathway. Acts via the formation of a quaternary complex composed of pum, nanos, brat and the 3'-UTR mRNA of hb. Binds RNA with no specificity. Posterior part of the embryo. While the transcript is present throughout the embryo, nanos translation is controlled by smg, and the protein is found in pole plasm and pole cells. In the female ovary expressed in germline stem cells, precystoblasts and in maturing cystoblasts; in early cystoblasts expression is post-transcriptionally repressed by bam in a 3'UTR-dependent manner.

The protein resides in the cytoplasm. Its subcellular location is the cytoplasmic ribonucleoprotein granule. Functionally, maternal RNA-binding protein that is required for germ cells proliferation and self-renewal. Acts by forming a complex with pum and brat that regulates translation and mRNA stability. The complex binds to the Nanos Response Element (NRE), a 16 bp sequence in the hb mRNA 3'-UTR and prevents its translation. Controls posterior development. Rescuing factor for the abdominal defect of posterior group mutants. The other posterior group genes are not required for nanos function but rather play a role in localization or distribution of nanos protein. The chain is Protein nanos from Drosophila melanogaster (Fruit fly).